Reading from the N-terminus, the 127-residue chain is Class I hydrophobin 1 (127 aa).

The signal sequence occupies residues 1 to 20 (MLSLLSKAVSLAILVTAVVA). Disulfide bonds link Cys-53–Cys-108, Cys-60–Cys-102, Cys-61–Cys-94, and Cys-109–Cys-122. Asn-66 is a glycosylation site (N-linked (GlcNAc...) asparagine).

This sequence belongs to the fungal hydrophobin family. As to quaternary structure, self-assembles to form functional amyloid fibrils called rodlets. Self-assembly into fibrillar rodlets occurs spontaneously at hydrophobic:hydrophilic interfaces and the rodlets further associate laterally to form amphipathic monolayers. Expressed everywhere in the mycelial tissues of developing fruiting bodies except for the top parts of the pileus (cap) and for the prehymenophore; but high level of the transcript is detected in the parts surrounding the prehymenophore.

The protein localises to the secreted. It localises to the cell wall. Functionally, aerial growth, conidiation, and dispersal of filamentous fungi in the environment rely upon a capability of their secreting small amphipathic proteins called hydrophobins (HPBs) with low sequence identity. Class I can self-assemble into an outermost layer of rodlet bundles on aerial cell surfaces, conferring cellular hydrophobicity that supports fungal growth, development and dispersal; whereas Class II form highly ordered films at water-air interfaces through intermolecular interactions but contribute nothing to the rodlet structure. Hyd1 is a class I hydrophobin that plays a role in fruiting body initiation rather than in mature fruit body maintenance. Seems to be involved in the formation in the extracellular matrix of lined air channels with a hydrophobic membrane. These channels may help to provide gas exchange during respiration in mycelial tissues of developing fruiting bodies and are formed all over the mycelial tissues of these developing fruiting bodies except for the top parts of the pileus (cap) and for the prehymenophore. This chain is Class I hydrophobin 1, found in Lentinula edodes (Shiitake mushroom).